We begin with the raw amino-acid sequence, 196 residues long: DnaA initiator-associating protein DiaA (196 aa).

Positions 34-196 (LVQSLLNGNK…DNTLFPHQDD (163 aa)) constitute an SIS domain.

The protein belongs to the SIS family. DiaA subfamily. In terms of assembly, homotetramer; dimer of dimers.

Required for the timely initiation of chromosomal replication via direct interactions with the DnaA initiator protein. This Enterobacter sp. (strain 638) protein is DnaA initiator-associating protein DiaA.